A 222-amino-acid polypeptide reads, in one-letter code: Vespryn (222 aa).

Positions 1–44 are cleaved as a signal peptide; that stretch reads MSPSAGLQFSLYFLQTKKVLWKLTDKEKGLCYILLFTLCFFADQ. Positions 45–52 are excised as a propeptide; sequence ENGGKALA. The B30.2/SPRY domain maps to 53-159; it reads SPPGIWKRAD…RIWQMGLWWL (107 aa). The propeptide occupies 160–222; the sequence is RHLETDPGRV…LGGTVSLTTL (63 aa). Asn195 is a glycosylation site (N-linked (GlcNAc...) asparagine).

Belongs to the ohanin/vespryn family. In terms of tissue distribution, expressed by the venom gland.

The protein localises to the secreted. Neurotoxin that produces dose-dependent hypolocomotion and hyperalgesia in mice. May directly act on the central nervous system, as it is 6500-fold more potent when administered intracerebroventricularly than intraperitoneal. The polypeptide is Vespryn (Crotalus adamanteus (Eastern diamondback rattlesnake)).